A 304-amino-acid chain; its full sequence is MLPRLGGPALPLLLPSLLLLLLLGAGGCGPGVRAEVLFRCPPCTPERLAACGPPPDAPCAELVREPGCGCCSVCARQEGEACGVYIPRCAQTLRCYPNPGSELPLKALVTGAGTCEKRRVGATPQQVADSEDDHSEGGLVENHVDGTMNMLGGSSAGRKPPKSGMKELAVFREKVNEQHRQMGKGAKHLSLEEPKKLRPPPARTPCQQELDQVLERISTMRLPDDRGPLEHLYSLHIPNCDKHGLYNLKQCKMSLNGQRGECWCVNPNTGKPIQGAPTIRGDPECHLFYNEQQENDGAHAQRVQ.

Positions 1–34 are cleaved as a signal peptide; that stretch reads MLPRLGGPALPLLLPSLLLLLLLGAGGCGPGVRA. One can recognise an IGFBP N-terminal domain in the interval 36-118; sequence VLFRCPPCTP…VTGAGTCEKR (83 aa). 9 disulfides stabilise this stretch: Cys40–Cys68, Cys43–Cys70, Cys51–Cys71, Cys59–Cys74, Cys82–Cys95, Cys89–Cys115, Cys206–Cys240, Cys251–Cys262, and Cys264–Cys285. Residues 203 to 285 form the Thyroglobulin type-1 domain; sequence RTPCQQELDQ…APTIRGDPEC (83 aa). A Cell attachment site motif is present at residues 280–282; sequence RGD.

As to quaternary structure, interacts with IGF1. Interacts with IGF2. Interacts (via RGD motif) with integrin alpha5/ITGA5; this interaction induces cell migration, adhesion or apoptosis according to the context. Interacts with PTPRB; this interaction leads to PTPRB dimerization and inactivation. In terms of processing, cleaved by MMP9 leading to release of free IGF2 from IGFBP2-IGF2 complex, which contributes to enhance the motility and the growth of astrocytes. Post-translationally, O-glycosylated. In terms of tissue distribution, in adults, expressed in brain, testes, ovaries, and kidney. Expression in the adult liver is barely detectable.

The protein localises to the secreted. Functionally, multifunctional protein that plays a critical role in regulating the availability of IGFs such as IGF1 and IGF2 to their receptors and thereby regulates IGF-mediated cellular processes including proliferation, differentiation, and apoptosis in a cell-type specific manner. Functions coordinately with receptor protein tyrosine phosphatase beta/PTPRB and the IGF1 receptor to regulate IGF1-mediated signaling by stimulating the phosphorylation of PTEN leading to its inactivation and AKT1 activation. Plays a positive role in cell migration via interaction with integrin alpha5/ITGA5 through an RGD motif. Additionally, interaction with ITGA5/ITGB1 enhances the adhesion of endothelial progenitor cells to endothelial cells. Upon mitochondrial damage, facilitates apoptosis with ITGA5 of podocytes, and then activates the phosphorylation of focal adhesion kinase (FAK)-mediated mitochondrial injury. This chain is Insulin-like growth factor-binding protein 2 (Igfbp2), found in Rattus norvegicus (Rat).